A 469-amino-acid polypeptide reads, in one-letter code: Regulator of G-protein signaling 7 (469 aa).

The 76-residue stretch at 37 to 112 folds into the DEP domain; the sequence is EKNGIPIRTV…DDGTFYRFQT (76 aa). Phosphoserine occurs at positions 229 and 241. The interval 236–255 is disordered; sequence DIRSHSPTHTPTPETKPPTE. Thr243 carries the phosphothreonine modification. Residues 255–316 enclose the G protein gamma domain; it reads EDELHQQIKY…LSDDTTFWEL (62 aa). In terms of domain architecture, RGS spans 333-448; sequence GMDEALKDPV…IRSSAYQELL (116 aa). At Ser434 the chain carries Phosphoserine.

In terms of assembly, interacts with GNB5, forming the RGS7-GNB5 complex. Interacts with GPR158; promotes the GTPase activator activity of the RGS7-GNB5 complex in absence of glycine, in contrast GTPase activator activity of the RGS7-GNB5 complex is inhibited in presence of glycine. Interacts with GPR179. Interacts with PKD1; this prevents rapid proteasomal degradation. Interacts with RGS7BP, leading to regulate the subcellular location of the heterodimer formed with GNB5. Interacts (phosphorylated form) with 14-3-3 protein YWHAQ. Interacts with SNAPIN. Interacts with GNAI1. Interacts with GNAO1, GNAI3 and GNAZ. Post-translationally, palmitoylated. In terms of processing, ubiquitinated, leading to rapid proteasomal degradation. Phosphorylation and subsequent interaction with 14-3-3 proteins inhibits GAP activity. In terms of tissue distribution, detected in brain (at protein level).

The protein resides in the cytoplasm. Its subcellular location is the cytosol. It localises to the cell membrane. It is found in the membrane. GTPase activator component of the RGS7-GNB5 complex that regulates G protein-coupled receptor signaling cascades. The RGS7-GNB5 complex acts as an inhibitor signal transduction by promoting the GTPase activity of G protein alpha subunits, such as GNAO1, thereby driving them into their inactive GDP-bound form. May play a role in synaptic vesicle exocytosis. Glycine-dependent regulation of the RGS7-GNB5 complex by GPR158 affects mood and cognition via its ability to regulate neuronal excitability in L2/L3 pyramidal neurons of the prefrontal cortex. Modulates the activity of potassium channels that are activated by GNAO1 in response to muscarinic acetylcholine receptor M2/CHRM2 signaling. This is Regulator of G-protein signaling 7 (Rgs7) from Mus musculus (Mouse).